Reading from the N-terminus, the 194-residue chain is MTDTWLIVGLGNPGSEYSNNRHNVGQMVLDELASRMGGKFKVHKARAQVVEGRLGIGGPRVVLAKPMTYMNVSGGPVAGLCNFFDIAPDHVIAVHDEIDIPFNTVKLKMGGGEGGHNGLRDISKALATKDYLRVRVGVGRPPGRMETADYVLRDFATAEKKELPFLLDEAADAVELLMDQGLLAAQQKHHPAKA.

Y17 is a binding site for tRNA. The active-site Proton acceptor is H22. Residues Y69, N71, and N117 each contribute to the tRNA site.

The protein belongs to the PTH family. In terms of assembly, monomer.

Its subcellular location is the cytoplasm. The enzyme catalyses an N-acyl-L-alpha-aminoacyl-tRNA + H2O = an N-acyl-L-amino acid + a tRNA + H(+). Hydrolyzes ribosome-free peptidyl-tRNAs (with 1 or more amino acids incorporated), which drop off the ribosome during protein synthesis, or as a result of ribosome stalling. In terms of biological role, catalyzes the release of premature peptidyl moieties from peptidyl-tRNA molecules trapped in stalled 50S ribosomal subunits, and thus maintains levels of free tRNAs and 50S ribosomes. The protein is Peptidyl-tRNA hydrolase of Paenarthrobacter aurescens (strain TC1).